Reading from the N-terminus, the 121-residue chain is Large ribosomal subunit protein uL18 (121 aa).

This sequence belongs to the universal ribosomal protein uL18 family. Part of the 50S ribosomal subunit; part of the 5S rRNA/L5/L18/L25 subcomplex. Contacts the 5S and 23S rRNAs.

In terms of biological role, this is one of the proteins that bind and probably mediate the attachment of the 5S RNA into the large ribosomal subunit, where it forms part of the central protuberance. The chain is Large ribosomal subunit protein uL18 from Ehrlichia canis (strain Jake).